A 447-amino-acid chain; its full sequence is Protein king tubby (447 aa).

Composition is skewed to low complexity over residues 71-92 and 157-169; these read GTGP…YSDS and NNNN…NSSS. A disordered region spans residues 71 to 196; sequence GTGPNVTATS…GGAPDTEGDV (126 aa).

Belongs to the TUB family.

It localises to the cytoplasm. The protein resides in the nucleus. The sequence is that of Protein king tubby from Anopheles gambiae (African malaria mosquito).